The sequence spans 582 residues: Zinc finger protein 319 (582 aa).

Positions 1-14 (MSESWQQPPQTQPQ) are enriched in low complexity. The tract at residues 1–39 (MSESWQQPPQTQPQQPQPPQPQHHAEPPPALAEHTLPPG) is disordered. The C2H2-type 1 zinc finger occupies 76–100 (PKCGVCGHDLAHLSSPHEHQCLAGH). Residues 104 to 126 (FQCTQCLKIFHQATDLLEHQCVQ) form a C2H2-type 2; degenerate zinc finger. Lys130 is covalently cross-linked (Glycyl lysine isopeptide (Lys-Gly) (interchain with G-Cter in SUMO2)). The C2H2-type 3 zinc finger occupies 132 to 154 (FVCGVCKMGFSLLTSLAQHHSSH). Positions 174–196 (EPATTAAPSLPAAPAPSTVTPAE) are enriched in low complexity. Positions 174–198 (EPATTAAPSLPAAPAPSTVTPAEQA) are disordered. C2H2-type zinc fingers lie at residues 202 to 224 (YSCP…ERIH), 230 to 252 (YKCT…KRTH), and 258 to 280 (YKCA…MYAH). Residue Ser281 is modified to Phosphoserine. The segment at 287 to 309 (FRCNVCELHFKESSELLQHPCTP) adopts a C2H2-type 7; degenerate zinc-finger fold. 3 consecutive C2H2-type zinc fingers follow at residues 315–337 (FRCG…ERTH), 343–365 (FKCD…RRTH), and 371–393 (FKCG…QHVH). A C2H2-type 11; degenerate zinc finger spans residues 399–421 (FKCPVCQKGFDQSAELLRHKCLP). Residues 428 to 450 (FKCPVCNKAYKRASALQKHQLAH) form a C2H2-type 12 zinc finger. A C2H2-type 13; degenerate zinc finger spans residues 458–480 (LRCTLCERRFFSSSEFVQHRCDP). 3 consecutive C2H2-type zinc fingers follow at residues 486 to 508 (LKCP…RRVH), 514 to 536 (YKCP…QGVH), and 542 to 564 (FKCV…SAQH).

The protein belongs to the krueppel C2H2-type zinc-finger protein family.

Its subcellular location is the nucleus. Its function is as follows. May be involved in transcriptional regulation. This is Zinc finger protein 319 (ZNF319) from Homo sapiens (Human).